Here is a 512-residue protein sequence, read N- to C-terminus: 2,3-bisphosphoglycerate-independent phosphoglycerate mutase (512 aa).

Positions 11 and 61 each coordinate Mn(2+). Ser-61 acts as the Phosphoserine intermediate in catalysis. Residues His-122, Arg-152–Asp-153, Arg-184, Arg-190, Arg-259–Arg-262, and Lys-332 each bind substrate. Positions 399, 403, 440, 441, and 459 each coordinate Mn(2+).

This sequence belongs to the BPG-independent phosphoglycerate mutase family. Monomer. It depends on Mn(2+) as a cofactor.

The enzyme catalyses (2R)-2-phosphoglycerate = (2R)-3-phosphoglycerate. It functions in the pathway carbohydrate degradation; glycolysis; pyruvate from D-glyceraldehyde 3-phosphate: step 3/5. Its function is as follows. Catalyzes the interconversion of 2-phosphoglycerate and 3-phosphoglycerate. In Francisella philomiragia subsp. philomiragia (strain ATCC 25017 / CCUG 19701 / FSC 153 / O#319-036), this protein is 2,3-bisphosphoglycerate-independent phosphoglycerate mutase.